Here is a 415-residue protein sequence, read N- to C-terminus: Lipoyl synthase, apicoplast (415 aa).

A signal peptide spans 1-23 (MHFGIPSLFYLYILFSIIMRIKC). Positions 153, 158, 164, 179, 183, 186, and 394 each coordinate [4Fe-4S] cluster. The 219-residue stretch at 165–383 (WNIGTATIML…KEEGLKMGFK (219 aa)) folds into the Radical SAM core domain.

This sequence belongs to the radical SAM superfamily. Lipoyl synthase family. Requires [4Fe-4S] cluster as cofactor.

It localises to the plastid. The protein localises to the apicoplast. The catalysed reaction is [[Fe-S] cluster scaffold protein carrying a second [4Fe-4S](2+) cluster] + N(6)-octanoyl-L-lysyl-[protein] + 2 oxidized [2Fe-2S]-[ferredoxin] + 2 S-adenosyl-L-methionine + 4 H(+) = [[Fe-S] cluster scaffold protein] + N(6)-[(R)-dihydrolipoyl]-L-lysyl-[protein] + 4 Fe(3+) + 2 hydrogen sulfide + 2 5'-deoxyadenosine + 2 L-methionine + 2 reduced [2Fe-2S]-[ferredoxin]. It participates in protein modification; protein lipoylation via endogenous pathway; protein N(6)-(lipoyl)lysine from octanoyl-[acyl-carrier-protein]: step 2/2. In terms of biological role, catalyzes the radical-mediated insertion of two sulfur atoms into the C-6 and C-8 positions of the octanoyl moiety bound to the lipoyl domains of lipoate-dependent enzymes, thereby converting the octanoylated domains into lipoylated derivatives. This Plasmodium falciparum (isolate 3D7) protein is Lipoyl synthase, apicoplast.